We begin with the raw amino-acid sequence, 410 residues long: Elongation factor Tu, chloroplastic (410 aa).

One can recognise a tr-type G domain in the interval 10-215 (KPHVNIGTIG…NVDSYIPTPE (206 aa)). The tract at residues 19 to 26 (GHVDHGKT) is G1. 19–26 (GHVDHGKT) is a GTP binding site. Thr26 serves as a coordination point for Mg(2+). The G2 stretch occupies residues 61–65 (GITIN). Residues 82–85 (DCPG) form a G3 region. GTP-binding positions include 82 to 86 (DCPGH) and 137 to 140 (NKKD). Positions 137–140 (NKKD) are G4. Positions 175–177 (SAL) are G5.

It belongs to the TRAFAC class translation factor GTPase superfamily. Classic translation factor GTPase family. EF-Tu/EF-1A subfamily.

The protein localises to the plastid. The protein resides in the chloroplast. It catalyses the reaction GTP + H2O = GDP + phosphate + H(+). Functionally, GTP hydrolase that promotes the GTP-dependent binding of aminoacyl-tRNA to the A-site of ribosomes during protein biosynthesis. The chain is Elongation factor Tu, chloroplastic (tufA) from Oltmannsiellopsis viridis (Marine flagellate).